The following is a 156-amino-acid chain: Small ribosomal subunit protein uS7c (156 aa).

It belongs to the universal ribosomal protein uS7 family. Part of the 30S ribosomal subunit.

It localises to the plastid. The protein resides in the chloroplast. In terms of biological role, one of the primary rRNA binding proteins, it binds directly to 16S rRNA where it nucleates assembly of the head domain of the 30S subunit. This Porphyra purpurea (Red seaweed) protein is Small ribosomal subunit protein uS7c (rps7).